Reading from the N-terminus, the 44-residue chain is Defensin-like peptide (44 aa).

3 disulfide bridges follow: Cys-7–Cys-32, Cys-18–Cys-40, and Cys-22–Cys-42.

In terms of tissue distribution, hemolymph.

It is found in the secreted. Its function is as follows. Has antibacterial activity against the Gram-positive bacterium S.lutea (MIC=1.9 uM). Lacks antibacterial activity against the Gram-positive bacteria L.monocytogenes and M.luteus, and the Gram-negative bacteria E.coli D31, E.coli ATCC 25922, and S.typhimurium. Has antifungal activity against A.niger (MIC=2.9 uM), C.albicans (MIC=2.9 uM), C.fructus (MIC=2.9 uM), C.wickerhamii (MIC=2.9 uM), P.pastoris (MIC=2.9 uM), P.stiptis (MIC=2.9 uM), P.tannophilus (MIC=2.9 uM), T.harzianum (MIC=2.9 uM), and Z.marxianus (MIC=2.9 uM), but lacks antifungal activity against C.albidus, F.oxysporum, and S.cerevisiae. This is Defensin-like peptide from Galleria mellonella (Greater wax moth).